Reading from the N-terminus, the 411-residue chain is MADVVVGIQWGDEGKGKIVDRIAKDYDFVVRYQGGHNAGHTIVHKGVKHSLHLMPSGVLYPKCKNIISSAVVVSVKDLCEEISAFEDLENRLFVSDRAHVILPYHAKKDAFKEKSQNIGTTKKGIGPCYEDKMARSGIRMGDLLDDKILEEKLNAHFKAIEPFKEAYGLGENYEKDLREYFKTYAKKICPFIKDTTSMLIEANQKGEKILLEGAQGTLLDIDLGTYPFVTSSNTTSASACVSTGLNPKAINEVIGITKAYSTRVGNGPFPSEDATPMGDHLRTKGAEFGTTTKRPRRCGWLDLVALKYACALNGCTQLALMKLDVLDGIDAIKVCVAYERKGERLEAFPSDLKDCMPIYQTFKGWEKSVGVRKLEDLEPNAREYVRFIEKEVGVKIGLISTSPEREDTIFL.

Residues 11-17 and 39-41 contribute to the GTP site; these read GDEGKGK and GHT. Residue D12 is the Proton acceptor of the active site. The Mg(2+) site is built by D12 and G39. IMP-binding positions include 12–15, 37–40, T121, R135, Q215, T230, and R294; these read DEGK and NAGH. H40 (proton donor) is an active-site residue. 290 to 296 is a substrate binding site; that stretch reads TTTKRPR. GTP is bound by residues R296, 322 to 324, and 400 to 402; these read KLD and STS.

It belongs to the adenylosuccinate synthetase family. In terms of assembly, homodimer. Requires Mg(2+) as cofactor.

The protein localises to the cytoplasm. The enzyme catalyses IMP + L-aspartate + GTP = N(6)-(1,2-dicarboxyethyl)-AMP + GDP + phosphate + 2 H(+). It functions in the pathway purine metabolism; AMP biosynthesis via de novo pathway; AMP from IMP: step 1/2. In terms of biological role, plays an important role in the de novo pathway of purine nucleotide biosynthesis. Catalyzes the first committed step in the biosynthesis of AMP from IMP. The chain is Adenylosuccinate synthetase from Helicobacter pylori (strain G27).